Reading from the N-terminus, the 149-residue chain is Glutamate mutase sigma subunit (149 aa).

In terms of domain architecture, B12-binding spans 5-138 (DPTVVLGTIG…DAVKTELDVD (134 aa)). Residues 15 to 19 (SDAHA), His-18, 63 to 65 (SSL), and 94 to 98 (NLAVG) contribute to the adenosylcob(III)alamin site.

The protein belongs to the methylaspartate mutase GlmS subunit family. As to quaternary structure, heterotetramer composed of 2 epsilon subunits (GlmE) and 2 sigma subunits (GlmS). GlmE exists as a homodimer and GlmS as a monomer. The cofactor is adenosylcob(III)alamin.

The enzyme catalyses (2S,3S)-3-methyl-L-aspartate = L-glutamate. The protein operates within amino-acid degradation; L-glutamate degradation via mesaconate pathway; acetate and pyruvate from L-glutamate: step 1/4. Functionally, catalyzes the carbon skeleton rearrangement of L-glutamate to L-threo-3-methylaspartate ((2S,3S)-3-methylaspartate). In Halobacterium salinarum (strain ATCC 700922 / JCM 11081 / NRC-1) (Halobacterium halobium), this protein is Glutamate mutase sigma subunit.